Reading from the N-terminus, the 221-residue chain is 3-dehydroquinate dehydratase (221 aa).

Residues 33–35 (EIR) and R63 contribute to the 3-dehydroquinate site. H118 acts as the Proton donor/acceptor in catalysis. K144 functions as the Schiff-base intermediate with substrate in the catalytic mechanism. Residues R181, T200, and Q204 each coordinate 3-dehydroquinate.

This sequence belongs to the type-I 3-dehydroquinase family. In terms of assembly, homodimer.

It carries out the reaction 3-dehydroquinate = 3-dehydroshikimate + H2O. Its pathway is metabolic intermediate biosynthesis; chorismate biosynthesis; chorismate from D-erythrose 4-phosphate and phosphoenolpyruvate: step 3/7. In terms of biological role, involved in the third step of the chorismate pathway, which leads to the biosynthesis of aromatic amino acids. Catalyzes the cis-dehydration of 3-dehydroquinate (DHQ) and introduces the first double bond of the aromatic ring to yield 3-dehydroshikimate. In Methanothermobacter thermautotrophicus (strain ATCC 29096 / DSM 1053 / JCM 10044 / NBRC 100330 / Delta H) (Methanobacterium thermoautotrophicum), this protein is 3-dehydroquinate dehydratase.